Here is a 263-residue protein sequence, read N- to C-terminus: Small ribosomal subunit protein bS1c (263 aa).

3 consecutive S1 motif domains span residues 27–96 (GDIV…LSIR), 114–178 (DSLL…LSHR), and 192–260 (GNII…LSMK).

The protein belongs to the bacterial ribosomal protein bS1 family.

The protein resides in the plastid. Its subcellular location is the chloroplast. The protein is Small ribosomal subunit protein bS1c (rps1) of Porphyra purpurea (Red seaweed).